Reading from the N-terminus, the 445-residue chain is Crotonyl-CoA reductase (445 aa).

Residue E149 coordinates Zn(2+).

It belongs to the zinc-containing alcohol dehydrogenase family. Crotonyl-CoA carboxylase/reductase subfamily. Homodimer. Requires Zn(2+) as cofactor.

The catalysed reaction is butanoyl-CoA + NADP(+) = (2E)-butenoyl-CoA + NADPH + H(+). Its activity is regulated as follows. Inhibited by NADPH at concentrations above 200 uM, by MgCl (30%), by ZnCl(2) (55%), and by CoCl, MnCl and CaCl (100%). Also inhibited by iodoacetamide, N-ethylmaleamide, the thiol group inhibitor beta-chloromercuribenzoate, palmitoyl-CoA and myristoyl-CoA. In terms of biological role, catalyzes the conversion of crotonyl-CoA to butyryl-CoA. It uses only NADP as electron donor. May have a role in providing butyryl-CoA as a starter unit for straight-chain fatty acid biosynthesis. The polypeptide is Crotonyl-CoA reductase (ccrA2) (Streptomyces avermitilis (strain ATCC 31267 / DSM 46492 / JCM 5070 / NBRC 14893 / NCIMB 12804 / NRRL 8165 / MA-4680)).